Consider the following 166-residue polypeptide: 2-C-methyl-D-erythritol 2,4-cyclodiphosphate synthase (166 aa).

The a divalent metal cation site is built by aspartate 11 and histidine 13. Residues 11–13 (DVH) and 40–41 (HS) contribute to the 4-CDP-2-C-methyl-D-erythritol 2-phosphate site. A divalent metal cation is bound at residue histidine 48. 4-CDP-2-C-methyl-D-erythritol 2-phosphate is bound by residues 62–64 (DLG), 135–138 (TTSD), phenylalanine 142, and arginine 145.

Belongs to the IspF family. In terms of assembly, homotrimer. A divalent metal cation is required as a cofactor.

It carries out the reaction 4-CDP-2-C-methyl-D-erythritol 2-phosphate = 2-C-methyl-D-erythritol 2,4-cyclic diphosphate + CMP. It participates in isoprenoid biosynthesis; isopentenyl diphosphate biosynthesis via DXP pathway; isopentenyl diphosphate from 1-deoxy-D-xylulose 5-phosphate: step 4/6. In terms of biological role, involved in the biosynthesis of isopentenyl diphosphate (IPP) and dimethylallyl diphosphate (DMAPP), two major building blocks of isoprenoid compounds. Catalyzes the conversion of 4-diphosphocytidyl-2-C-methyl-D-erythritol 2-phosphate (CDP-ME2P) to 2-C-methyl-D-erythritol 2,4-cyclodiphosphate (ME-CPP) with a corresponding release of cytidine 5-monophosphate (CMP). In Pseudarthrobacter chlorophenolicus (strain ATCC 700700 / DSM 12829 / CIP 107037 / JCM 12360 / KCTC 9906 / NCIMB 13794 / A6) (Arthrobacter chlorophenolicus), this protein is 2-C-methyl-D-erythritol 2,4-cyclodiphosphate synthase.